Consider the following 266-residue polypeptide: Type II iodothyronine deiodinase (266 aa).

The Lumenal portion of the chain corresponds to 1–9; it reads MGLLSVDLL. Residues 10 to 34 traverse the membrane as a helical; Signal-anchor for type III membrane protein segment; sequence ITLQILPVFFSNCLFLALYDSVILL. Residues 35–266 lie on the Cytoplasmic side of the membrane; it reads KHVALLLSRS…KNFSKRUILD (232 aa). Residue Sec130 is part of the active site. Non-standard amino acids (selenocysteine) are located at Sec130 and Sec263.

This sequence belongs to the iodothyronine deiodinase family. As to quaternary structure, predominantly monomer. Can form homodimers but homodimerization is not essential for enzyme activity. Interacts with USP20 and USP33. Interacts with MARCHF6. In terms of processing, ubiquitinated by MARCHF6, leading to its degradation by the proteasome. Deubiquitinated by USP20 and USP33. In terms of tissue distribution, expressed in mammary gland and in brain.

The protein localises to the endoplasmic reticulum membrane. It carries out the reaction 3,3',5-triiodo-L-thyronine + iodide + A + H(+) = L-thyroxine + AH2. The catalysed reaction is 3,3'-diiodo-L-thyronine + iodide + A + H(+) = 3,3',5'-triiodo-L-thyronine + AH2. The enzyme catalyses 3'-iodo-L-thyronine + iodide + A + H(+) = 3',5'-diiodo-L-thyronine + AH2. It catalyses the reaction 3,3'-diiodothyronamine + iodide + A + H(+) = 3,3',5'-triiodothyronamine + AH2. It carries out the reaction 3'-iodothyronamine + iodide + A + H(+) = 3',5'-diiodothyronamine + AH2. Plays a crucial role in the metabolism of thyroid hormones (TH) and has specific roles in TH activation and inactivation by deiodination. Catalyzes the deiodination of L-thyroxine (T4) to 3,5,3'-triiodothyronine (T3) and 3,3',5'-triiodothyronine (rT3) to 3,3'-diiodothyronine (3,3'-T2) via outer-ring deiodination (ORD). Catalyzes the deiodination of 3',5'-diiodothyronine (3',5'-T2) to 3'-monoiodothyronine (3'-T1) via ORD. Catalyzes the phenolic ring deiodinations of 3,3',5'-triiodothyronamine and 3',5'- diiodothyronamine. This Mus musculus (Mouse) protein is Type II iodothyronine deiodinase (Dio2).